The chain runs to 853 residues: uncharacterized protein (853 aa).

Coiled coils occupy residues 313-343 (RTDEDFKEAAKKREESEKRMNKMLENRLKVA) and 480-528 (EGQV…SELI).

This is an uncharacterized protein from Ostreid herpesvirus 1 (isolate France) (OsHV-1).